A 545-amino-acid polypeptide reads, in one-letter code: Thermosome subunit alpha (545 aa).

Residues 522–545 (KKSTPPSGQGGQGQGMPGGGMPEY) are disordered. The span at 529–545 (GQGGQGQGMPGGGMPEY) shows a compositional bias: gly residues.

It belongs to the TCP-1 chaperonin family. As to quaternary structure, forms a Heterooligomeric complex of two stacked eight-membered rings. In terms of processing, the N-terminus is blocked.

Functionally, molecular chaperone; binds unfolded polypeptides in vitro, and has a weak ATPase activity. The chain is Thermosome subunit alpha (thsA) from Thermoplasma acidophilum (strain ATCC 25905 / DSM 1728 / JCM 9062 / NBRC 15155 / AMRC-C165).